Consider the following 290-residue polypeptide: PIH1 domain-containing protein 1 (290 aa).

Positions 34–50 (ELQQAQTSRPESTQIQP) are enriched in polar residues. Residues 34-53 (ELQQAQTSRPESTQIQPQPG) are disordered. Ser173 is subject to Phosphoserine.

It belongs to the PIH1 family. As to quaternary structure, component of the R2TP complex composed at least of RUVBL1, RUVBL2, RPAP3 and PIHD1. Component of the PAQosome complex which is responsible for the biogenesis of several protein complexes and which consists of R2TP complex members RUVBL1, RUVBL2, RPAP3 and PIH1D1, URI complex members PFDN2, PFDN6, PDRG1, UXT and URI1 as well as ASDURF, POLR2E and DNAAF10/WDR92. Interacts with phosphorylated TELO2 and mediates interaction of TELO2 with the R2TP complex. Interacts with phosphorylated ECD, EFTUD2/SNRP116, RPB1 and UBR5 and with RPB1 in a phosphorylation-independent manner. Interacts with the core C/D box snoRNP particle components NOP58 and FBL and with RUVBL1/TIP49. Interacts with RPAP3 and DNAAF10. Interacts with histone H4 and with SWI/SNF complex member SMARCB1/SNF5. Interacts with the mTORC1 complex member RPTOR. Interacts with MSL1.

The protein localises to the nucleus. Involved in the assembly of C/D box small nucleolar ribonucleoprotein (snoRNP) particles. Recruits the SWI/SNF complex to the core promoter of rRNA genes and enhances pre-rRNA transcription. Mediates interaction of TELO2 with the R2TP complex which is necessary for the stability of MTOR and SMG1. Positively regulates the assembly and activity of the mTORC1 complex. The polypeptide is PIH1 domain-containing protein 1 (PIH1D1) (Bos taurus (Bovine)).